The following is a 245-amino-acid chain: MDIAPEREDSVDMPARRRWFEDRRVLKRIVLAVLIVLILPYALIVFYLLPFIHPVSTLMLRDLVLLRGYDRQWVSLDNIAPVVVQSVMMSEDGQYCFHGGVDWAEMRMLVEDTLKGQATRGGSTIPMQTAKNLFLWNGRSFVRKALELPLAVTTDFVLSKRRLMEIYLNIAEWGPGIYGIEAAARHHFKVPASKLTRRQASLLAVSLPNPIDRNAGKPGRGLRRLAGVIERRAQGSGDYIKCIYD.

A helical transmembrane segment spans residues 29–49 (IVLAVLIVLILPYALIVFYLL).

The protein belongs to the glycosyltransferase 51 family.

It localises to the cell inner membrane. The enzyme catalyses [GlcNAc-(1-&gt;4)-Mur2Ac(oyl-L-Ala-gamma-D-Glu-L-Lys-D-Ala-D-Ala)](n)-di-trans,octa-cis-undecaprenyl diphosphate + beta-D-GlcNAc-(1-&gt;4)-Mur2Ac(oyl-L-Ala-gamma-D-Glu-L-Lys-D-Ala-D-Ala)-di-trans,octa-cis-undecaprenyl diphosphate = [GlcNAc-(1-&gt;4)-Mur2Ac(oyl-L-Ala-gamma-D-Glu-L-Lys-D-Ala-D-Ala)](n+1)-di-trans,octa-cis-undecaprenyl diphosphate + di-trans,octa-cis-undecaprenyl diphosphate + H(+). Its pathway is cell wall biogenesis; peptidoglycan biosynthesis. Its function is as follows. Peptidoglycan polymerase that catalyzes glycan chain elongation from lipid-linked precursors. This Rhizobium johnstonii (strain DSM 114642 / LMG 32736 / 3841) (Rhizobium leguminosarum bv. viciae) protein is Biosynthetic peptidoglycan transglycosylase.